The chain runs to 461 residues: MTTDNSAPTASPWWSLPGKFLRREFLPVLTDLRLAIALLLIIALFSISGTVIEQGQSPAFYQANYPEHPALFGFLTWKVIQVVGLDHVYRTWWFLSLLVLFGTSLTACTFTRQLPALKTAQRWKYYEEPRQFQKLALSAELDAGSVNSLSQILQNRRYKIFQEKDDILYARKGIVGRIGPIIVHIGIVTILLGSIWGAMTGFIAQEMVPSGETFQVKNIIDAGPLAAGQFPQDWSVRVNRFWIDYTPKGGIDQFYSDMSVLDNQGKEVDHKKIFVNQPLRYHGVTFYQTDWGISGVRVRLNKSPIFQLPMALLNTNGQGRIWGTWIPTKPDLSEGVSLLAKDLQGMVLIYDAQGKLVDTVRAGMSTQVNGVTLKVLDVVGSTGLQIKADPGIPIVYTGFGILMLGVVMSYFSHSQIWALQKGDRLYVGGKTNRAQVAFEQEVLEILERLSSQSATASNQQS.

3 helical membrane-spanning segments follow: residues 32-52 (LRLA…GTVI), 91-111 (TWWF…CTFT), and 178-198 (IGPI…IWGA).

Belongs to the Ccs1/CcsB family. May interact with CcsA.

Its subcellular location is the cellular thylakoid membrane. Its function is as follows. Required during biogenesis of c-type cytochromes (cytochrome c6 and cytochrome f) at the step of heme attachment. The sequence is that of Cytochrome c biogenesis protein CcsB from Trichormus variabilis (strain ATCC 29413 / PCC 7937) (Anabaena variabilis).